We begin with the raw amino-acid sequence, 1140 residues long: uncharacterized protein (1140 aa).

7 disordered regions span residues 1 to 49 (MGSS…TSPE), 97 to 243 (SSDI…STIS), 280 to 427 (TSSS…KSSV), 512 to 541 (ASST…DLSK), 702 to 747 (FSTP…STAS), 916 to 1059 (CPEK…PIGR), and 1080 to 1103 (LSSS…GTSS). Positions 105-129 (VNDVESSTSGPSNSYSALSSTNAQL) are enriched in polar residues. Composition is skewed to low complexity over residues 130–154 (SSST…TSSS), 172–214 (TTAS…TTSD), and 221–243 (SSST…STIS). The span at 516–528 (LGSKVSSSNSRMA) shows a compositional bias: polar residues. 2 stretches are compositionally biased toward low complexity: residues 529–541 (TSKT…DLSK) and 703–718 (STPE…VTSE). Polar residues predominate over residues 719-733 (APSTVSSMTTSAPFI). Over residues 734 to 747 (NNSTSARPSPSTAS) the composition is skewed to low complexity. The segment covering 949–961 (SFKDMKTSQETKK) has biased composition (basic and acidic residues). Residues 977 to 997 (EKTSPTTKASPSTSPSESKAA) are compositionally biased toward low complexity. Composition is skewed to polar residues over residues 998 to 1023 (GNTS…STSV), 1031 to 1055 (TKNS…STES), and 1089 to 1103 (RSTT…GTSS).

This is an uncharacterized protein from Saccharomyces cerevisiae (strain ATCC 204508 / S288c) (Baker's yeast).